Here is a 305-residue protein sequence, read N- to C-terminus: Glycine--tRNA ligase alpha subunit (305 aa).

It belongs to the class-II aminoacyl-tRNA synthetase family. In terms of assembly, tetramer of two alpha and two beta subunits.

It is found in the cytoplasm. The catalysed reaction is tRNA(Gly) + glycine + ATP = glycyl-tRNA(Gly) + AMP + diphosphate. This Streptococcus pyogenes serotype M49 (strain NZ131) protein is Glycine--tRNA ligase alpha subunit.